Consider the following 90-residue polypeptide: Putative UPF0401 protein YpjI (90 aa).

It belongs to the UPF0401 family.

This Escherichia coli (strain K12) protein is Putative UPF0401 protein YpjI (ypjI).